The primary structure comprises 325 residues: Beta-ketoacyl-[acyl-carrier-protein] synthase III (325 aa).

Residues C116 and H252 contribute to the active site. The ACP-binding stretch occupies residues 253–257; it reads QANLR. N282 is an active-site residue.

This sequence belongs to the thiolase-like superfamily. FabH family. As to quaternary structure, homodimer.

It localises to the cytoplasm. It carries out the reaction malonyl-[ACP] + acetyl-CoA + H(+) = 3-oxobutanoyl-[ACP] + CO2 + CoA. It functions in the pathway lipid metabolism; fatty acid biosynthesis. In terms of biological role, catalyzes the condensation reaction of fatty acid synthesis by the addition to an acyl acceptor of two carbons from malonyl-ACP. Catalyzes the first condensation reaction which initiates fatty acid synthesis and may therefore play a role in governing the total rate of fatty acid production. Possesses both acetoacetyl-ACP synthase and acetyl transacylase activities. Its substrate specificity determines the biosynthesis of branched-chain and/or straight-chain of fatty acids. The polypeptide is Beta-ketoacyl-[acyl-carrier-protein] synthase III (Xanthomonas euvesicatoria pv. vesicatoria (strain 85-10) (Xanthomonas campestris pv. vesicatoria)).